The sequence spans 92 residues: UPF0213 protein MGAS9429_Spy1198 (92 aa).

One can recognise a GIY-YIG domain in the interval 4–80 (KKAYMYVLEC…KRKTRSQKLA (77 aa)).

It belongs to the UPF0213 family.

The protein is UPF0213 protein MGAS9429_Spy1198 of Streptococcus pyogenes serotype M12 (strain MGAS9429).